The sequence spans 1845 residues: Helicase swr-1 (1845 aa).

The segment covering 1–13 (MTTMMTDSGTASD) has biased composition (polar residues). Residues 1–329 (MTTMMTDSGT…GASRATPRIK (329 aa)) form a disordered region. Positions 24-38 (NDTTTTTTTTTTPGD) are enriched in low complexity. The span at 63–84 (SKSYSSTHHVPAIDNTSTTNAN) shows a compositional bias: polar residues. Positions 98–108 (SPLSSISSPLS) are enriched in low complexity. A compositionally biased stretch (basic and acidic residues) spans 168-180 (PKPESPPWKKFEA). Positions 216–243 (AIQTSPVSNKSSASTSRKPAPASSSNSK) are enriched in polar residues. Pro residues-rich tracts occupy residues 248-258 (KMPPPPPPPKA) and 283-292 (PRRPATPPKP). In terms of domain architecture, HSA spans 418 to 493 (PEAEEEPPRQ…EMEASKAKWR (76 aa)). Disordered stretches follow at residues 539-713 (QKLQ…LFFG) and 749-935 (ELQV…TVKT). The segment covering 549 to 565 (DGDEITDEDEDEDDEDL) has biased composition (acidic residues). Positions 574 to 585 (GDEKESDEHSDQ) are enriched in basic and acidic residues. Composition is skewed to acidic residues over residues 586 to 608 (GSDE…SSED) and 663 to 704 (NDDD…DDEP). Composition is skewed to polar residues over residues 762-777 (TNGT…SQTE) and 815-834 (TNDS…NQTL). Residues 888–897 (SQSQTQSPKT) show a composition bias toward low complexity. The span at 898-909 (TDTKPTDVDTPH) shows a compositional bias: basic and acidic residues. Residues 922-933 (RQSSPQPTTPTV) are compositionally biased toward polar residues. The Helicase ATP-binding domain occupies 957–1122 (AGLYANNTNG…WSLLYFLAPP (166 aa)). An ATP-binding site is contributed by 970 to 977 (DEMGLGKT). The DEAH box motif lies at 1073–1076 (DEAH). A Helicase C-terminal domain is found at 1510–1660 (ALDKLLRKLQ…DVVIQEGEFT (151 aa)). 3 disordered regions span residues 1702-1724 (TTGA…PPVR), 1751-1783 (QDEA…GGEE), and 1816-1845 (LEGT…SRKR). The segment covering 1704–1718 (GAGGYDGTADGGGGA) has biased composition (gly residues). Residues 1769-1781 (DGLADLDGQLLGG) show a composition bias toward low complexity. The span at 1826-1845 (DRKKGRDRNRNRKGKDSRKR) shows a compositional bias: basic residues.

The protein belongs to the SNF2/RAD54 helicase family. SWR1 subfamily. In terms of assembly, component of the SWR1 chromatin-remodeling complex.

It is found in the nucleus. It catalyses the reaction ATP + H2O = ADP + phosphate + H(+). Its function is as follows. Catalytic component of the SWR1 complex which mediates the ATP-dependent exchange of histone H2A for the H2A variant H2A.Z leading to transcriptional regulation of selected genes by chromatin remodeling. The protein is Helicase swr-1 (crf1-1) of Neurospora crassa (strain ATCC 24698 / 74-OR23-1A / CBS 708.71 / DSM 1257 / FGSC 987).